The following is a 424-amino-acid chain: Serine hydroxymethyltransferase (424 aa).

(6S)-5,6,7,8-tetrahydrofolate is bound by residues leucine 119 and glycine 123 to leucine 125. N6-(pyridoxal phosphate)lysine is present on lysine 228. Serine 353–phenylalanine 355 is a (6S)-5,6,7,8-tetrahydrofolate binding site.

This sequence belongs to the SHMT family. As to quaternary structure, homodimer. The cofactor is pyridoxal 5'-phosphate.

It localises to the cytoplasm. It carries out the reaction (6R)-5,10-methylene-5,6,7,8-tetrahydrofolate + glycine + H2O = (6S)-5,6,7,8-tetrahydrofolate + L-serine. The protein operates within one-carbon metabolism; tetrahydrofolate interconversion. It participates in amino-acid biosynthesis; glycine biosynthesis; glycine from L-serine: step 1/1. Functionally, catalyzes the reversible interconversion of serine and glycine with tetrahydrofolate (THF) serving as the one-carbon carrier. Also exhibits THF-independent aldolase activity toward beta-hydroxyamino acids, producing glycine and aldehydes, via a retro-aldol mechanism. The sequence is that of Serine hydroxymethyltransferase from Natronomonas pharaonis (strain ATCC 35678 / DSM 2160 / CIP 103997 / JCM 8858 / NBRC 14720 / NCIMB 2260 / Gabara) (Halobacterium pharaonis).